Reading from the N-terminus, the 74-residue chain is Sodium channel neurotoxin MeuNaTxalpha-11 (74 aa).

A signal peptide spans 1-7; sequence LMTGVES. The LCN-type CS-alpha/beta domain occupies 9–73; sequence RDAYIAKPHN…VPIRIPGKCH (65 aa). Intrachain disulfides connect cysteine 19/cysteine 72, cysteine 23/cysteine 45, cysteine 31/cysteine 55, and cysteine 35/cysteine 57. Residue arginine 74 is a propeptide, removed by a carboxypeptidase.

The protein belongs to the long (4 C-C) scorpion toxin superfamily. Sodium channel inhibitor family. Alpha subfamily. Expressed by the venom gland.

It localises to the secreted. In terms of biological role, alpha toxins bind voltage-independently at site-3 of sodium channels (Nav) and inhibit the inactivation of the activated channels, thereby blocking neuronal transmission. This chain is Sodium channel neurotoxin MeuNaTxalpha-11, found in Mesobuthus eupeus (Lesser Asian scorpion).